The following is a 525-amino-acid chain: Light-independent protochlorophyllide reductase subunit B (525 aa).

[4Fe-4S] cluster is bound at residue aspartate 36. Aspartate 290 (proton donor) is an active-site residue. 425-426 (GL) lines the substrate pocket.

This sequence belongs to the ChlB/BchB/BchZ family. As to quaternary structure, protochlorophyllide reductase is composed of three subunits; ChlL, ChlN and ChlB. Forms a heterotetramer of two ChlB and two ChlN subunits. [4Fe-4S] cluster is required as a cofactor.

It catalyses the reaction chlorophyllide a + oxidized 2[4Fe-4S]-[ferredoxin] + 2 ADP + 2 phosphate = protochlorophyllide a + reduced 2[4Fe-4S]-[ferredoxin] + 2 ATP + 2 H2O. The protein operates within porphyrin-containing compound metabolism; chlorophyll biosynthesis (light-independent). In terms of biological role, component of the dark-operative protochlorophyllide reductase (DPOR) that uses Mg-ATP and reduced ferredoxin to reduce ring D of protochlorophyllide (Pchlide) to form chlorophyllide a (Chlide). This reaction is light-independent. The NB-protein (ChlN-ChlB) is the catalytic component of the complex. This chain is Light-independent protochlorophyllide reductase subunit B, found in Prochlorococcus marinus (strain MIT 9312).